An 856-amino-acid polypeptide reads, in one-letter code: Facilitated trehalose transporter Tret1 (856 aa).

2 disordered regions span residues 1 to 27 and 62 to 202; these read MSGR…GKLK and DPFL…KATS. Topologically, residues 1-389 are cytoplasmic; the sequence is MSGRDNRGAG…LEVYRPTTNP (389 aa). Positions 69–80 are enriched in polar residues; sequence VSPQRHPQTVRT. Residues 133–142 show a composition bias toward basic and acidic residues; it reads EIREHRDRQQ. Residues 170-180 show a composition bias toward polar residues; that stretch reads GNSNTNNNKAA. Residues serine 247, serine 248, serine 249, serine 319, and serine 321 each carry the phosphoserine modification. A disordered region spans residues 326–345; sequence LTSRQHFQQQRSISTDSRKS. Polar residues predominate over residues 329-340; it reads RQHFQQQRSIST. The chain crosses the membrane as a helical span at residues 390 to 410; it reads IFIWTQVLAALSVSLGSLVVG. Residues 411–439 are Extracellular-facing; sequence FVSAYTSPALVSMTDRNITSFEVTQDAGS. Asparagine 427 is a glycosylation site (N-linked (GlcNAc...) asparagine). A helical membrane pass occupies residues 440-460; sequence WVGGIMPLAGLAGGIAGGPLI. The Cytoplasmic segment spans residues 461–472; sequence EYLGRRNTILAT. Residues 473 to 493 form a helical membrane-spanning segment; the sequence is AVPFIVSSLLIACAVNVAMVL. Residues 494 to 496 are Extracellular-facing; sequence CGR. Residues 497–517 form a helical membrane-spanning segment; it reads FLAGFCVGIASLSLPVYLGET. Over 518 to 527 the chain is Cytoplasmic; it reads VQPEVRGTLG. The chain crosses the membrane as a helical span at residues 528-548; it reads LLPTAFGNIGILLCFVAGSFM. A glycan (N-linked (GlcNAc...) asparagine) is linked at asparagine 549. The Extracellular segment spans residues 549-551; that stretch reads NWS. Residues 552-572 form a helical membrane-spanning segment; it reads MLAFLGAALPVPFLILMFLIP. Over 573 to 635 the chain is Cytoplasmic; that stretch reads ETPRWFVSRG…ELLKRNNLKP (63 aa). Residues 636–656 traverse the membrane as a helical segment; that stretch reads LSISLGLMFFQQLSGINAVIF. Over 657–672 the chain is Extracellular; it reads YTVQIFKDAGSTIDGN. Residues 673–693 traverse the membrane as a helical segment; sequence ICTIIVGVVNFLATFIGIVLI. The Cytoplasmic segment spans residues 694–699; it reads DRAGRK. Residues 700-720 traverse the membrane as a helical segment; sequence ILLYVSNIAMILTLFVLGGFF. Residues 721-739 lie on the Extracellular side of the membrane; it reads YCKAHGPDVSNLGWLPLTC. Residues 740-760 form a helical membrane-spanning segment; the sequence is FVIYILGFSLGFGPIPWLMMG. Residues 761–766 lie on the Cytoplasmic side of the membrane; it reads EILPAK. A helical membrane pass occupies residues 767 to 787; that stretch reads IRGSAASVATAFNWSCTFVVT. Residues 788–800 are Extracellular-facing; the sequence is KTFQDLTVAMGAH. Residues 801 to 821 traverse the membrane as a helical segment; the sequence is GAFWLFGAICFVGLFFVIIYV. Topologically, residues 822–856 are cytoplasmic; it reads PETQGKTLEDIERKMMGRVRRMSSVANIKPLSFNM. Phosphoserine occurs at positions 844 and 845.

The protein belongs to the major facilitator superfamily. Sugar transporter (TC 2.A.1.1) family. Trehalose transporter subfamily.

The protein resides in the cell membrane. In terms of biological role, low-capacity facilitative transporter for trehalose. Does not transport maltose, sucrose or lactose. Mediates the bidirectional transfer of trehalose. Responsible for the transport of trehalose synthesized in the fat body and the incorporation of trehalose into other tissues that require a carbon source, thereby regulating trehalose levels in the hemolymph. This chain is Facilitated trehalose transporter Tret1, found in Drosophila erecta (Fruit fly).